The chain runs to 197 residues: Pyridoxal 5'-phosphate synthase subunit PdxT (197 aa).

54-56 provides a ligand contact to L-glutamine; sequence GES. The active-site Nucleophile is the C86. L-glutamine is bound by residues R113 and 141–142; that span reads IR. Catalysis depends on charge relay system residues H177 and E179.

The protein belongs to the glutaminase PdxT/SNO family. As to quaternary structure, in the presence of PdxS, forms a dodecamer of heterodimers. Only shows activity in the heterodimer.

It carries out the reaction aldehydo-D-ribose 5-phosphate + D-glyceraldehyde 3-phosphate + L-glutamine = pyridoxal 5'-phosphate + L-glutamate + phosphate + 3 H2O + H(+). The enzyme catalyses L-glutamine + H2O = L-glutamate + NH4(+). Its pathway is cofactor biosynthesis; pyridoxal 5'-phosphate biosynthesis. Catalyzes the hydrolysis of glutamine to glutamate and ammonia as part of the biosynthesis of pyridoxal 5'-phosphate. The resulting ammonia molecule is channeled to the active site of PdxS. This chain is Pyridoxal 5'-phosphate synthase subunit PdxT, found in Haloarcula marismortui (strain ATCC 43049 / DSM 3752 / JCM 8966 / VKM B-1809) (Halobacterium marismortui).